A 230-amino-acid chain; its full sequence is Ribonuclease 3 (230 aa).

An RNase III domain is found at 5-134 (EALLKSSFAI…FLGALLLDKG (130 aa)). Glutamate 47 lines the Mg(2+) pocket. The active site involves aspartate 51. 2 residues coordinate Mg(2+): aspartate 120 and glutamate 123. The active site involves glutamate 123. One can recognise a DRBM domain in the interval 160–229 (DYKTSLQEIL…AENALKALSE (70 aa)).

Belongs to the ribonuclease III family. As to quaternary structure, homodimer. Mg(2+) is required as a cofactor.

Its subcellular location is the cytoplasm. The enzyme catalyses Endonucleolytic cleavage to 5'-phosphomonoester.. Its function is as follows. Digests double-stranded RNA. Involved in the processing of primary rRNA transcript to yield the immediate precursors to the large and small rRNAs (23S and 16S). Processes some mRNAs, and tRNAs when they are encoded in the rRNA operon. Processes pre-crRNA and tracrRNA of type II CRISPR loci if present in the organism. In Streptococcus uberis (strain ATCC BAA-854 / 0140J), this protein is Ribonuclease 3.